The sequence spans 529 residues: Basal body-orientation factor 1 (529 aa).

The span at 1–13 (MPSKGKDKKKGKS) shows a compositional bias: basic residues. The interval 1–22 (MPSKGKDKKKGKSRGKDTKKLI) is disordered. 2 coiled-coil regions span residues 55–198 (DTSR…LKQE) and 271–361 (IKEK…EVER). Residues 510–529 (GKVVLPTIPKGPQESDTGTF) are disordered.

The protein belongs to the BBOF1 family. In terms of assembly, interacts with MNS1 and ODF2.

The protein localises to the cytoplasm. It localises to the cytoskeleton. The protein resides in the cilium basal body. Its subcellular location is the flagellum axoneme. In terms of biological role, plays an essential role in sperm motility and male fertility by stabilizing the sperm flagellar axonemal structure. May be required for the stability of ODF2 and MANS1 proteins. Dispensable for the assembly and function of motile cilia. The sequence is that of Basal body-orientation factor 1 from Macaca fascicularis (Crab-eating macaque).